Here is a 462-residue protein sequence, read N- to C-terminus: Cytochrome P450 20A1 (462 aa).

The helical transmembrane segment at 4–24 threads the bilayer; it reads FAIFAVTFLLALVGAVLYLYP. C409 is a heme binding site.

Belongs to the cytochrome P450 family. Heme serves as cofactor.

Its subcellular location is the membrane. This Bos taurus (Bovine) protein is Cytochrome P450 20A1 (CYP20A1).